Here is a 318-residue protein sequence, read N- to C-terminus: Ribosomal RNA small subunit methyltransferase H (318 aa).

Residues 35-37 (AGH), Asp55, Phe84, Asp105, and Gln112 each bind S-adenosyl-L-methionine. Residues 294 to 318 (SDSELSENNRSRSAKLRIAEKIKSR) form a disordered region.

Belongs to the methyltransferase superfamily. RsmH family.

It localises to the cytoplasm. It catalyses the reaction cytidine(1402) in 16S rRNA + S-adenosyl-L-methionine = N(4)-methylcytidine(1402) in 16S rRNA + S-adenosyl-L-homocysteine + H(+). Functionally, specifically methylates the N4 position of cytidine in position 1402 (C1402) of 16S rRNA. The protein is Ribosomal RNA small subunit methyltransferase H of Enterococcus faecalis (strain ATCC 700802 / V583).